The sequence spans 158 residues: SsrA-binding protein (158 aa).

The protein belongs to the SmpB family.

Its subcellular location is the cytoplasm. Functionally, required for rescue of stalled ribosomes mediated by trans-translation. Binds to transfer-messenger RNA (tmRNA), required for stable association of tmRNA with ribosomes. tmRNA and SmpB together mimic tRNA shape, replacing the anticodon stem-loop with SmpB. tmRNA is encoded by the ssrA gene; the 2 termini fold to resemble tRNA(Ala) and it encodes a 'tag peptide', a short internal open reading frame. During trans-translation Ala-aminoacylated tmRNA acts like a tRNA, entering the A-site of stalled ribosomes, displacing the stalled mRNA. The ribosome then switches to translate the ORF on the tmRNA; the nascent peptide is terminated with the 'tag peptide' encoded by the tmRNA and targeted for degradation. The ribosome is freed to recommence translation, which seems to be the essential function of trans-translation. The protein is SsrA-binding protein of Saccharopolyspora erythraea (strain ATCC 11635 / DSM 40517 / JCM 4748 / NBRC 13426 / NCIMB 8594 / NRRL 2338).